Consider the following 511-residue polypeptide: Endoglucanase B (511 aa).

Positions 1–29 (MNLLSGWVRPLMLGCGLLGAALSAGSIQA) are cleaved as a signal peptide. The 101-residue stretch at 30–130 (AVCEYRVTNE…AVTGAICGGQ (101 aa)) folds into the CBM2 domain. The cysteines at positions 32 and 127 are disulfide-linked. The disordered stretch occupies residues 137 to 173 (SVASSSSSSSVVSSTPRSSSSSVSSSVPGTSSSSSSS). A CBM10 domain is found at 180 to 209 (ACNWYGTLTPLCNNTSNGWGYEDGRSCVAR). Disulfide bonds link Cys181/Cys212 and Cys191/Cys206. Asp276 (nucleophile) is an active-site residue. Residue Asp393 is the Proton donor of the active site.

Belongs to the glycosyl hydrolase 45 (cellulase K) family.

It is found in the periplasm. The enzyme catalyses Endohydrolysis of (1-&gt;4)-beta-D-glucosidic linkages in cellulose, lichenin and cereal beta-D-glucans.. This enzyme catalyzes the endohydrolysis of 1,4-beta-glucosidic linkages in cellulose, lichenin and cereal beta-D-glucans. EGB is most active against barley beta-glucan, but showed significant activity against amorphous and crystalline cellulose. This chain is Endoglucanase B (celB), found in Cellvibrio japonicus (strain Ueda107) (Pseudomonas fluorescens subsp. cellulosa).